We begin with the raw amino-acid sequence, 533 residues long: Tyrosine/DOPA decarboxylase 3 (533 aa).

The residue at position 319 (lysine 319) is an N6-(pyridoxal phosphate)lysine.

The protein belongs to the group II decarboxylase family. In terms of assembly, homodimer. Pyridoxal 5'-phosphate is required as a cofactor. Roots.

It carries out the reaction L-tyrosine + H(+) = tyramine + CO2. The catalysed reaction is L-dopa + H(+) = dopamine + CO2. The enzyme catalyses 5-hydroxy-L-tryptophan + H(+) = serotonin + CO2. Marginally higher substrate specificity for L-DOPA over L-tyrosine. This Papaver somniferum (Opium poppy) protein is Tyrosine/DOPA decarboxylase 3 (TYDC3).